Reading from the N-terminus, the 693-residue chain is Pentatricopeptide repeat-containing protein At2g19280 (693 aa).

PPR repeat units follow at residues 200–234, 235–269, 270–304, 305–339, 340–370, 372–406, 407–441, 442–476, 477–511, 512–546, 547–581, 582–616, and 617–651; these read LETV…GIFP, SRGV…GRHL, NAAV…GIRP, DIVA…GISQ, DSVS…FRLR, NIFV…GLLP, DCVC…GNPP, SLTT…GLKL, DVVT…GISP, DVAT…GFVP, STLA…RMKP, DVVT…GLKP, and DVVL…GMLP.

It belongs to the PPR family. P subfamily.

This is Pentatricopeptide repeat-containing protein At2g19280 from Arabidopsis thaliana (Mouse-ear cress).